A 193-amino-acid polypeptide reads, in one-letter code: Transcriptional activator GvpE2 (193 aa).

Position 143-148 (143-148) interacts with DNA; sequence KRKVYR. The leucine-zipper stretch occupies residues 153 to 184; the sequence is QAAIEHVDSVVLQLLTFAVGLQTIMADCIVNQ.

Homodimer. Interacts with endogenous GvpD, also with GvpD from H.mediterranei.

It is found in the cytoplasm. Degraded once GvpD is translated; degradation requires 'Arg-494' of GvpD; tested in transgenic H.volcanii. Fusion of green fluorescent protein to its C-terminus partially protects it from degradation. Its function is as follows. Plays a regulatory role in gas vesicle synthesis, required to activate transcription of the c-gvpA operon. Gas vesicles are hollow, gas filled proteinaceous nanostructures found in several microbial planktonic microorganisms. They allow positioning of halobacteria at the optimal depth for growth in the poorly aerated, shallow brine pools of their habitat. In terms of biological role, expression of 2 c-vac DNA fragments containing 2 divergently transcribed regions (gvpE-gvpF-gvpG-gvpH-gvpI-gvpJ-gvpK-gvpL-gvpM and gvpA-gvpC-gvpN-gvpO) allows H.volcanii to produce gas vesicles. All site-directed mutagenesis is tested in H.volcanii. In Halobacterium salinarum (strain ATCC 700922 / JCM 11081 / NRC-1) (Halobacterium halobium), this protein is Transcriptional activator GvpE2.